The sequence spans 167 residues: Small ribosomal subunit protein uS3m (167 aa).

A mitochondrion-targeting transit peptide spans 1–35 (MVALYCGGGLRPLMLSWSRDLPCIWRALHTSAVCF).

The protein belongs to the universal ribosomal protein uS3 family. As to quaternary structure, component of the mitochondrial ribosome small subunit (28S) which comprises a 12S rRNA and about 30 distinct proteins.

It is found in the mitochondrion. The chain is Small ribosomal subunit protein uS3m (MRPS24) from Bos taurus (Bovine).